The primary structure comprises 86 residues: Toxin ICK-18 (86 aa).

The signal sequence occupies residues 1 to 19 (MKTIFALVFCCAIAVVVLG). 4 disulfide bridges follow: Cys35-Cys49, Cys42-Cys61, Cys48-Cys76, and Cys79-Cys86.

This sequence belongs to the neurotoxin 21 family. In terms of tissue distribution, expressed by the venom gland.

It is found in the secreted. Probable neurotoxin with ion channel impairing activity. In Trittame loki (Brush-footed trapdoor spider), this protein is Toxin ICK-18.